We begin with the raw amino-acid sequence, 172 residues long: 3-hydroxydecanoyl-[acyl-carrier-protein] dehydratase (172 aa).

H71 is a catalytic residue.

The protein belongs to the thioester dehydratase family. FabA subfamily. In terms of assembly, homodimer.

The protein resides in the cytoplasm. The catalysed reaction is a (3R)-hydroxyacyl-[ACP] = a (2E)-enoyl-[ACP] + H2O. The enzyme catalyses (3R)-hydroxydecanoyl-[ACP] = (2E)-decenoyl-[ACP] + H2O. It carries out the reaction (2E)-decenoyl-[ACP] = (3Z)-decenoyl-[ACP]. It functions in the pathway lipid metabolism; fatty acid biosynthesis. In terms of biological role, necessary for the introduction of cis unsaturation into fatty acids. Catalyzes the dehydration of (3R)-3-hydroxydecanoyl-ACP to E-(2)-decenoyl-ACP and then its isomerization to Z-(3)-decenoyl-ACP. Can catalyze the dehydratase reaction for beta-hydroxyacyl-ACPs with saturated chain lengths up to 16:0, being most active on intermediate chain length. This chain is 3-hydroxydecanoyl-[acyl-carrier-protein] dehydratase, found in Escherichia coli O127:H6 (strain E2348/69 / EPEC).